We begin with the raw amino-acid sequence, 115 residues long: MIPMKRERMLTIRVTDDEHARLLERCEGKQLAVWMRRVCLGEPVARSGKLPTLAPPLLRQLAAIGNNLNQTARKVNSGQWSSGDRVQVVAALMAIGDELRRLRLAVREQGARDDS.

It to E.coli MbaC and MbkC. As to quaternary structure, homodimer. Interacts with MbeA and MbeB to form the relaxosome.

In terms of biological role, required for efficient mobilization of ColE1 plasmid and is thus essential to promote the specific transfer of the plasmid during conjugation. Probably functions by inducing DNA bending, helping the MbeA relaxase to melt the DNA around the nic site and cleave the phosphodiester bond. Binds specifically double-stranded DNA (dsDNA) containing the ColE1 oriT but does not recognize the inverted repeat (IR). In Escherichia coli, this protein is Mobilization protein MbeC (mbeC).